We begin with the raw amino-acid sequence, 375 residues long: Type II restriction enzyme ApaLI (375 aa).

It carries out the reaction Endonucleolytic cleavage of DNA to give specific double-stranded fragments with terminal 5'-phosphates.. Functionally, a subtype P restriction enzyme that recognizes the double-stranded sequence 5'-GTGCAC-3' and cleaves after G-1. This Acetobacter pasteurianus (Acetobacter turbidans) protein is Type II restriction enzyme ApaLI.